The primary structure comprises 485 residues: ATP synthase subunit beta 1 (485 aa).

157–164 provides a ligand contact to ATP; the sequence is GGAGVGKT.

Belongs to the ATPase alpha/beta chains family. As to quaternary structure, F-type ATPases have 2 components, CF(1) - the catalytic core - and CF(0) - the membrane proton channel. CF(1) has five subunits: alpha(3), beta(3), gamma(1), delta(1), epsilon(1). CF(0) has three main subunits: a(1), b(2) and c(9-12). The alpha and beta chains form an alternating ring which encloses part of the gamma chain. CF(1) is attached to CF(0) by a central stalk formed by the gamma and epsilon chains, while a peripheral stalk is formed by the delta and b chains.

The protein localises to the cell inner membrane. The catalysed reaction is ATP + H2O + 4 H(+)(in) = ADP + phosphate + 5 H(+)(out). Its function is as follows. Produces ATP from ADP in the presence of a proton gradient across the membrane. The catalytic sites are hosted primarily by the beta subunits. The chain is ATP synthase subunit beta 1 from Psychromonas ingrahamii (strain DSM 17664 / CCUG 51855 / 37).